We begin with the raw amino-acid sequence, 94 residues long: MSFIPIVCGMKSFDSSYDTVPGHQNLYCPNCHNYSVGPIKRKEFFTIWFIPLVPVFWGKQLHCPICNWRQDFKNDEQLNKVIQEQQNLRQKQPN.

The protein belongs to the UPF0768 family.

It is found in the cell membrane. In Saccharomyces cerevisiae (strain ATCC 204508 / S288c) (Baker's yeast), this protein is UPF0768 protein YBL029C-A.